A 127-amino-acid polypeptide reads, in one-letter code: MILLQAYEGLVPTLHSIIELCGKYRLRRSRDSSVCGWCIIRKDCFARRAWLNQPKSRKPKPPSSSLDLHNFCQATHEIFLLFSQELHQNSVIALVNFLHSSFESRKHDIAYTGKAIAIDFSSTSFPP.

It localises to the mitochondrion. This is an uncharacterized protein from Arabidopsis thaliana (Mouse-ear cress).